The sequence spans 542 residues: LysM domain-containing protein ARB_00327 (542 aa).

An N-terminal signal peptide occupies residues 1–35 (MLSSVLFPAMRTLLLLKYVFSLISLSAICCQTVSA). Asn218, Asn298, Asn381, and Asn415 each carry an N-linked (GlcNAc...) asparagine glycan. The LysM 1 domain maps to 264 to 310 (RWYGVKKGDYCNLIVLKFGITMDNFIFLNPALNSNCTNLYAEESYCV). Positions 439–484 (DSDEPTPTTPITTSDDPTSTSATPTTPTTSSKPSPGAPTMTGQPSA) are disordered. Low complexity predominate over residues 443-472 (PTPTTPITTSDDPTSTSATPTTPTTSSKPS). Residues 487–534 (KWHTVTNGESCTVIPKTFGITLEQFLAWNPTVKSDCTENFWAGYAYCV) enclose the LysM 2 domain.

The protein localises to the secreted. Functionally, might have a role in sequestration of chitin oligosaccharides (breakdown products of fungal cell walls that are released during invasion and act as triggers of host immunity) to dampen host defense. The chain is LysM domain-containing protein ARB_00327 from Arthroderma benhamiae (strain ATCC MYA-4681 / CBS 112371) (Trichophyton mentagrophytes).